The chain runs to 1664 residues: DNA-directed RNA polymerase I subunit RPA190 (1664 aa).

The Zn(2+) site is built by Cys-62, Cys-65, Cys-72, His-75, Cys-102, Cys-105, Cys-233, and Cys-236. Positions 280–310 are disordered; the sequence is QAKKLDGSNEASANDEESFDVGRNPTTRPKT. Mg(2+) contacts are provided by Asp-627, Asp-629, and Asp-631. Ser-889 carries the phosphoserine modification. The tract at residues 992–1004 is bridging helix; that stretch reads PQEYYFHCMAGRE. Residues 1343 to 1423 form a disordered region; sequence DIGVAVPRLQ…DSDSEDEDVD (81 aa). Over residues 1393-1414 the composition is skewed to basic and acidic residues; it reads ETMREAEKSSDEEGIDSDKESD. At Ser-1636 the chain carries Phosphoserine.

It belongs to the RNA polymerase beta' chain family. In terms of assembly, component of the RNA polymerase I (Pol I) complex consisting of 14 subunits: RPA135, RPA190, RPC40, RPA14, RPB5, RPO26, RPA43, RPB8, RPA12, RPB10, RPC19, RPC10, RPA49 and RPA34. The complex is composed of a horseshoe-shaped core containing ten subunits (RPA135, RPA190, RPB5, RPO26, RPB8, RPB10, RPC10, RPA12, RPC19 and RPC40) where RPA135 and RPA190 form the DNA-binding cleft. Outside of the core, RPA14 and RPA43 form the stalk that mediates interactions with transcription initiation factors and newly synthesized RNA.

Its subcellular location is the nucleus. It localises to the nucleolus. The catalysed reaction is RNA(n) + a ribonucleoside 5'-triphosphate = RNA(n+1) + diphosphate. Its function is as follows. DNA-dependent RNA polymerases catalyze the transcription of DNA into RNA using the four ribonucleoside triphosphates as substrates. Component of RNA polymerase I (Pol I) which synthesizes ribosomal RNA precursors. Besides, RNA polymerase I has intrinsic RNA cleavage activity. RPA190 and RPA135 both contribute to the polymerase catalytic activity and together form the Pol I active center. In addition, subunit RPA12 contributes a catalytic zinc ribbon that is required for RNA cleavage by Pol I. A single stranded DNA template strand of the promoter is positioned within the central active site cleft of Pol I. A bridging helix emanates from RPA190 and crosses the cleft near the catalytic site and is thought to promote translocation of Pol I by acting as a ratchet that moves the RNA-DNA hybrid through the active site by switching from straight to bent conformations at each step of nucleotide addition. The chain is DNA-directed RNA polymerase I subunit RPA190 (RPA190) from Saccharomyces cerevisiae (strain ATCC 204508 / S288c) (Baker's yeast).